Reading from the N-terminus, the 357-residue chain is 4-hydroxymandelate synthase (357 aa).

VOC domains lie at 5–129 (EIDY…LIQR) and 158–309 (GIDH…IFTA). His161 provides a ligand contact to Fe cation. The substrate site is built by His161, Ser201, Thr214, His241, and Gln305. His241 contributes to the Fe cation binding site. Glu320 contacts Fe cation.

The protein belongs to the 4HPPD family. Monomer. Fe cation is required as a cofactor.

It catalyses the reaction 3-(4-hydroxyphenyl)pyruvate + O2 = (S)-4-hydroxymandelate + CO2. It participates in antibiotic biosynthesis; vancomycin biosynthesis. Functionally, required to synthesize hydroxyphenylglycine, a recurring skeletal component of nonproteinogenic macrocyclic peptide antibiotics such as vancomycin. Catalyzes the conversion of p-hydroxyphenylpyruvate to p-hydroxymandelate. The decarboxylation and hydroxylation activities of HmaS show novel and distinct regioselectivity, compared to all other known p-hydroxyphenylpyruvate dioxygenases, by hydroxylating the benzylic position of the substrate instead of the phenyl ring. The chain is 4-hydroxymandelate synthase from Amycolatopsis orientalis (Nocardia orientalis).